Here is a 273-residue protein sequence, read N- to C-terminus: DnaJ homolog subfamily C member 27 (273 aa).

GTP is bound by residues 23-30 (GNAEVGKS), 71-75 (DMAGH), and 134-137 (NKID). One can recognise a J domain in the interval 217–273 (DSWDMLGVKPGATRDEVNKAYRKLAVLLHPDKCVAPGSEDAFKAVVNARTALLKNIK).

This sequence belongs to the small GTPase superfamily. Rab family.

It is found in the nucleus. Functionally, GTPase possibly involved in regulation of the MEK/ERK pathway. This chain is DnaJ homolog subfamily C member 27 (DNAJC27), found in Gallus gallus (Chicken).